The chain runs to 477 residues: tRNA-2-methylthio-N(6)-dimethylallyladenosine synthase (477 aa).

The MTTase N-terminal domain occupies 13–130 (GGLFIKTYGC…LPAMIEEALA (118 aa)). 6 residues coordinate [4Fe-4S] cluster: Cys-22, Cys-59, Cys-93, Cys-178, Cys-182, and Cys-185. The Radical SAM core domain occupies 164–396 (ESNGVSAFVS…QAMLNEQTAA (233 aa)). The TRAM domain occupies 399–462 (EGMVGTTQRV…ANSLKGKLVA (64 aa)).

It belongs to the methylthiotransferase family. MiaB subfamily. As to quaternary structure, monomer. [4Fe-4S] cluster serves as cofactor.

It is found in the cytoplasm. It catalyses the reaction N(6)-dimethylallyladenosine(37) in tRNA + (sulfur carrier)-SH + AH2 + 2 S-adenosyl-L-methionine = 2-methylsulfanyl-N(6)-dimethylallyladenosine(37) in tRNA + (sulfur carrier)-H + 5'-deoxyadenosine + L-methionine + A + S-adenosyl-L-homocysteine + 2 H(+). Its function is as follows. Catalyzes the methylthiolation of N6-(dimethylallyl)adenosine (i(6)A), leading to the formation of 2-methylthio-N6-(dimethylallyl)adenosine (ms(2)i(6)A) at position 37 in tRNAs that read codons beginning with uridine. This is tRNA-2-methylthio-N(6)-dimethylallyladenosine synthase from Hydrogenovibrio crunogenus (strain DSM 25203 / XCL-2) (Thiomicrospira crunogena).